Consider the following 225-residue polypeptide: Urease subunit alpha (225 aa).

A urease gamma region spans residues 1 to 102; it reads MRLTPKELDK…LVTIHNPIED (102 aa). The segment at 103–225 is urease beta; the sequence is NGKLTPGEYI…ANAAQKHFIH (123 aa).

It in the N-terminal section; belongs to the urease gamma subunit family. The protein in the C-terminal section; belongs to the urease beta subunit family. Heterohexamer of 3 UreA (alpha) and 3 UreB (beta) subunits.

It localises to the cytoplasm. It catalyses the reaction urea + 2 H2O + H(+) = hydrogencarbonate + 2 NH4(+). Its pathway is nitrogen metabolism; urea degradation; CO(2) and NH(3) from urea (urease route): step 1/1. The chain is Urease subunit alpha from Helicobacter hepaticus (strain ATCC 51449 / 3B1).